The chain runs to 247 residues: Uridylate kinase (247 aa).

K11–G14 serves as a coordination point for ATP. The interval G19–G24 is involved in allosteric activation by GTP. UMP is bound at residue G53. Residues G54 and R58 each contribute to the ATP site. Residues D73 and T134–T141 each bind UMP. Residues T161, Q162, Y167, and D170 each contribute to the ATP site.

It belongs to the UMP kinase family. As to quaternary structure, homohexamer.

It localises to the cytoplasm. It carries out the reaction UMP + ATP = UDP + ADP. It participates in pyrimidine metabolism; CTP biosynthesis via de novo pathway; UDP from UMP (UMPK route): step 1/1. With respect to regulation, allosterically activated by GTP. Inhibited by UTP. Catalyzes the reversible phosphorylation of UMP to UDP. The protein is Uridylate kinase of Chelativorans sp. (strain BNC1).